The sequence spans 277 residues: Formamidopyrimidine-DNA glycosylase (277 aa).

Proline 2 acts as the Schiff-base intermediate with DNA in catalysis. Glutamate 3 (proton donor) is an active-site residue. The active-site Proton donor; for beta-elimination activity is lysine 59. The DNA site is built by histidine 96, arginine 115, and arginine 158. Residues 243–277 (WVYGRGGNPCRRCGGEILREKRAGRSTHFCPRCQK) form an FPG-type zinc finger. Arginine 267 functions as the Proton donor; for delta-elimination activity in the catalytic mechanism.

It belongs to the FPG family. In terms of assembly, monomer. The cofactor is Zn(2+).

It catalyses the reaction Hydrolysis of DNA containing ring-opened 7-methylguanine residues, releasing 2,6-diamino-4-hydroxy-5-(N-methyl)formamidopyrimidine.. The enzyme catalyses 2'-deoxyribonucleotide-(2'-deoxyribose 5'-phosphate)-2'-deoxyribonucleotide-DNA = a 3'-end 2'-deoxyribonucleotide-(2,3-dehydro-2,3-deoxyribose 5'-phosphate)-DNA + a 5'-end 5'-phospho-2'-deoxyribonucleoside-DNA + H(+). Its function is as follows. Involved in base excision repair of DNA damaged by oxidation or by mutagenic agents. Acts as a DNA glycosylase that recognizes and removes damaged bases. Has a preference for oxidized purines, such as 7,8-dihydro-8-oxoguanine (8-oxoG). Has AP (apurinic/apyrimidinic) lyase activity and introduces nicks in the DNA strand. Cleaves the DNA backbone by beta-delta elimination to generate a single-strand break at the site of the removed base with both 3'- and 5'-phosphates. The chain is Formamidopyrimidine-DNA glycosylase from Heliobacterium modesticaldum (strain ATCC 51547 / Ice1).